We begin with the raw amino-acid sequence, 388 residues long: Succinate--CoA ligase [ADP-forming] subunit beta (388 aa).

The 236-residue stretch at 9–244 (KQLFREYGLP…TTQDDEREMH (236 aa)) folds into the ATP-grasp domain. ATP-binding positions include Lys-46, 53–55 (GRG), Glu-99, Ser-102, and Glu-107. Positions 199 and 213 each coordinate Mg(2+). Substrate is bound by residues Asn-264 and 321 to 323 (GIV).

It belongs to the succinate/malate CoA ligase beta subunit family. As to quaternary structure, heterotetramer of two alpha and two beta subunits. It depends on Mg(2+) as a cofactor.

The catalysed reaction is succinate + ATP + CoA = succinyl-CoA + ADP + phosphate. It catalyses the reaction GTP + succinate + CoA = succinyl-CoA + GDP + phosphate. It functions in the pathway carbohydrate metabolism; tricarboxylic acid cycle; succinate from succinyl-CoA (ligase route): step 1/1. Functionally, succinyl-CoA synthetase functions in the citric acid cycle (TCA), coupling the hydrolysis of succinyl-CoA to the synthesis of either ATP or GTP and thus represents the only step of substrate-level phosphorylation in the TCA. The beta subunit provides nucleotide specificity of the enzyme and binds the substrate succinate, while the binding sites for coenzyme A and phosphate are found in the alpha subunit. The sequence is that of Succinate--CoA ligase [ADP-forming] subunit beta from Psychromonas ingrahamii (strain DSM 17664 / CCUG 51855 / 37).